The chain runs to 105 residues: ATP-dependent Clp protease adapter protein ClpS (105 aa).

The protein belongs to the ClpS family. Binds to the N-terminal domain of the chaperone ClpA.

Functionally, involved in the modulation of the specificity of the ClpAP-mediated ATP-dependent protein degradation. This Aeromonas hydrophila subsp. hydrophila (strain ATCC 7966 / DSM 30187 / BCRC 13018 / CCUG 14551 / JCM 1027 / KCTC 2358 / NCIMB 9240 / NCTC 8049) protein is ATP-dependent Clp protease adapter protein ClpS.